The following is a 398-amino-acid chain: Phosphoglycerate kinase (398 aa).

Substrate contacts are provided by residues 21–23 (DFN), R36, 59–62 (HLGR), R119, and R157. Residues K208, G296, E327, and 354-357 (GGDS) contribute to the ATP site.

This sequence belongs to the phosphoglycerate kinase family. Monomer.

The protein localises to the cytoplasm. It carries out the reaction (2R)-3-phosphoglycerate + ATP = (2R)-3-phospho-glyceroyl phosphate + ADP. Its pathway is carbohydrate degradation; glycolysis; pyruvate from D-glyceraldehyde 3-phosphate: step 2/5. The protein is Phosphoglycerate kinase of Streptococcus equi subsp. zooepidemicus (strain H70).